Consider the following 243-residue polypeptide: tRNA1(Val) (adenine(37)-N6)-methyltransferase (243 aa).

It belongs to the methyltransferase superfamily. tRNA (adenine-N(6)-)-methyltransferase family.

It localises to the cytoplasm. The catalysed reaction is adenosine(37) in tRNA1(Val) + S-adenosyl-L-methionine = N(6)-methyladenosine(37) in tRNA1(Val) + S-adenosyl-L-homocysteine + H(+). Specifically methylates the adenine in position 37 of tRNA(1)(Val) (anticodon cmo5UAC). The protein is tRNA1(Val) (adenine(37)-N6)-methyltransferase of Shewanella loihica (strain ATCC BAA-1088 / PV-4).